Here is a 979-residue protein sequence, read N- to C-terminus: UPF0182 protein Rv0064 (979 aa).

7 helical membrane passes run 19-41 (LVTA…DIYV), 63-85 (LAIV…LLAY), 114-136 (LFGW…FDWV), 174-196 (WLFV…FGGL), 208-230 (AARV…AYWL), 261-280 (LVLV…AIFL), and 285-307 (IPAM…WPLL). Positions 898 to 948 (GTGRVATARGGDAASAPPPGAGGPAPPQAVPPPRTTQPPAAPPRGPDVPPA) are disordered. The span at 913 to 946 (APPPGAGGPAPPQAVPPPRTTQPPAAPPRGPDVP) shows a compositional bias: pro residues.

This sequence belongs to the UPF0182 family.

It is found in the cell membrane. This is UPF0182 protein Rv0064 from Mycobacterium tuberculosis (strain ATCC 25618 / H37Rv).